The following is a 481-amino-acid chain: RAC-beta serine/threonine-protein kinase (481 aa).

The residue at position 1 (methionine 1) is an N-acetylmethionine. In terms of domain architecture, PH spans serine 5–asparagine 108. The residue at position 34 (serine 34) is a Phosphoserine. Cysteine 60 and cysteine 77 are oxidised to a cystine. Serine 126 is subject to Phosphoserine. O-linked (GlcNAc) serine glycosylation is found at serine 128 and serine 131. The 258-residue stretch at phenylalanine 152–phenylalanine 409 folds into the Protein kinase domain. Residues leucine 158 to valine 166 and lysine 181 contribute to the ATP site. Aspartate 275 serves as the catalytic Proton acceptor. Positions 280 and 293 each coordinate Mn(2+). A disulfide bond links cysteine 297 and cysteine 311. A glycan (O-linked (GlcNAc) threonine) is linked at threonine 306. Threonine 309 carries the post-translational modification Phosphothreonine; by PDPK1. O-linked (GlcNAc) threonine glycosylation occurs at threonine 313. An AGC-kinase C-terminal domain is found at leucine 410–glutamate 481. Serine 447 is subject to Phosphoserine. Position 451 is a phosphothreonine (threonine 451). A phosphoserine; by MTOR mark is found at serine 474 and serine 478. O-linked (GlcNAc) serine; alternate glycosylation is present at serine 474.

The protein belongs to the protein kinase superfamily. AGC Ser/Thr protein kinase family. RAC subfamily. In terms of assembly, interacts with BTBD10. Interacts with KCTD20. Interacts (via PH domain) with MTCP1, TCL1A and TCL1B; this interaction may facilitate AKT2 oligomerization and phosphorylation, hence increasing kinase activity. Interacts with PHB2; this interaction may be important for myogenic differentiation. Interacts (when phosphorylated) with CLIP3/ClipR-59; this interaction promotes cell membrane localization. Interacts with WDFY2 (via WD repeats 1-3). In terms of processing, phosphorylation on Thr-309 and Ser-474 is required for full activity. Phosphorylation of the activation loop at Thr-309 by PDPK1/PDK1 is a prerequisite for full activation. Phosphorylated and activated by PDPK1/PDK1 in the presence of phosphatidylinositol 3,4,5-trisphosphate. Phosphorylation by mTORC2 in response to growth factors plays a key role in AKT1 activation: mTORC2 phosphorylates different sites depending on the context, such as Ser-474 or Ser-478, thereby facilitating subsequent phosphorylation of the activation loop by PDPK1/PDK1. Ubiquitinated; undergoes both 'Lys-48'- and 'Lys-63'-linked polyubiquitination. TRAF6-induced 'Lys-63'-linked AKT2 ubiquitination. When fully phosphorylated and translocated into the nucleus, undergoes 'Lys-48'-polyubiquitination catalyzed by TTC3, leading to its degradation by the proteasome. Post-translationally, O-GlcNAcylation at Thr-306 and Thr-313 inhibits activating phosphorylation at Thr-309 via disrupting the interaction between AKT and PDPK1/PDK1.

The protein resides in the cytoplasm. Its subcellular location is the nucleus. It localises to the cell membrane. The protein localises to the early endosome. It catalyses the reaction L-seryl-[protein] + ATP = O-phospho-L-seryl-[protein] + ADP + H(+). The enzyme catalyses L-threonyl-[protein] + ATP = O-phospho-L-threonyl-[protein] + ADP + H(+). With respect to regulation, two specific sites, one in the kinase domain (Thr-309) and the other in the C-terminal regulatory region (Ser-474), need to be phosphorylated for its full activation. AKT2 phosphorylation of PKP1 is induced by insulin. Inhibited by Akt inhibitor MK2206. In terms of biological role, AKT2 is one of 3 closely related serine/threonine-protein kinases (AKT1, AKT2 and AKT3) called the AKT kinases, and which regulate many processes including metabolism, proliferation, cell survival, growth and angiogenesis. This is mediated through serine and/or threonine phosphorylation of a range of downstream substrates. Over 100 substrate candidates have been reported so far, but for most of them, no isoform specificity has been reported. AKT is responsible of the regulation of glucose uptake by mediating insulin-induced translocation of the SLC2A4/GLUT4 glucose transporter to the cell surface. Phosphorylation of PTPN1 at 'Ser-50' negatively modulates its phosphatase activity preventing dephosphorylation of the insulin receptor and the attenuation of insulin signaling. Phosphorylation of TBC1D4 triggers the binding of this effector to inhibitory 14-3-3 proteins, which is required for insulin-stimulated glucose transport. AKT also regulates the storage of glucose in the form of glycogen by phosphorylating GSK3A at 'Ser-21' and GSK3B at 'Ser-9', resulting in inhibition of its kinase activity. Phosphorylation of GSK3 isoforms by AKT is also thought to be one mechanism by which cell proliferation is driven. AKT also regulates cell survival via the phosphorylation of MAP3K5 (apoptosis signal-related kinase). Phosphorylation of 'Ser-83' decreases MAP3K5 kinase activity stimulated by oxidative stress and thereby prevents apoptosis. AKT mediates insulin-stimulated protein synthesis by phosphorylating TSC2 at 'Ser-939' and 'Thr-1462', thereby activating mTORC1 signaling and leading to both phosphorylation of 4E-BP1 and in activation of RPS6KB1. AKT is involved in the phosphorylation of members of the FOXO factors (Forkhead family of transcription factors), leading to binding of 14-3-3 proteins and cytoplasmic localization. In particular, FOXO1 is phosphorylated at 'Thr-24', 'Ser-256' and 'Ser-319'. FOXO3 and FOXO4 are phosphorylated on equivalent sites. AKT has an important role in the regulation of NF-kappa-B-dependent gene transcription and positively regulates the activity of CREB1 (cyclic AMP (cAMP)-response element binding protein). The phosphorylation of CREB1 induces the binding of accessory proteins that are necessary for the transcription of pro-survival genes such as BCL2 and MCL1. AKT phosphorylates 'Ser-454' on ATP citrate lyase (ACLY), thereby potentially regulating ACLY activity and fatty acid synthesis. Activates the 3B isoform of cyclic nucleotide phosphodiesterase (PDE3B) via phosphorylation of 'Ser-273', resulting in reduced cyclic AMP levels and inhibition of lipolysis. Phosphorylates PIKFYVE on 'Ser-318', which results in increased PI(3)P-5 activity. The Rho GTPase-activating protein DLC1 is another substrate and its phosphorylation is implicated in the regulation cell proliferation and cell growth. AKT plays a role as key modulator of the AKT-mTOR signaling pathway controlling the tempo of the process of newborn neurons integration during adult neurogenesis, including correct neuron positioning, dendritic development and synapse formation. Signals downstream of phosphatidylinositol 3-kinase (PI(3)K) to mediate the effects of various growth factors such as platelet-derived growth factor (PDGF), epidermal growth factor (EGF), insulin and insulin-like growth factor I (IGF-I). AKT mediates the antiapoptotic effects of IGF-I. Essential for the SPATA13-mediated regulation of cell migration and adhesion assembly and disassembly. May be involved in the regulation of the placental development. In response to lysophosphatidic acid stimulation, inhibits the ciliogenesis cascade. In this context, phosphorylates WDR44, hence stabilizing its interaction with Rab11 and preventing the formation of the ciliogenic Rab11-FIP3-RAB3IP complex. Also phosphorylates RAB3IP/Rabin8, thus may affect RAB3IP guanine nucleotide exchange factor (GEF) activity toward Rab8, which is important for cilia growth. Phosphorylates PKP1, facilitating its interaction with YWHAG and translocation to the nucleus, ultimately resulting in a reduction in keratinocyte intercellular adhesion. Phosphorylation of PKP1 increases PKP1 protein stability, translocation to the cytoplasm away from desmosome plaques and PKP1-driven cap-dependent translation. Its function is as follows. Several AKT2-specific substrates have been identified, including ANKRD2, C2CD5, CLK2 and PITX2. May play a role in myoblast differentiation. In this context, may act through PITX2 phosphorylation. Unphosphorylated PITX2 associates with an ELAVL1/HuR-containing complex, which stabilizes cyclin mRNA and ensuring cell proliferation. Phosphorylation by AKT2 impairs this association, leading to CCND1 mRNA destabilization and progression towards differentiation. Also involved in the negative regulation of myogenesis in response to stress conditions. In this context, acts by phosphorylating ANKRD2. May also be a key regulator of glucose uptake. Regulates insulin-stimulated glucose transport by the increase of glucose transporter GLUT4 translocation from intracellular stores to the plasma membrane. In this context, acts by phosphorylating C2CD5/CDP138 on 'Ser-197' in insulin-stimulated adipocytes. Through the phosphorylation of CLK2 on 'Thr-343', involved in insulin-regulated suppression of hepatic gluconeogenesis. In Mus musculus (Mouse), this protein is RAC-beta serine/threonine-protein kinase (Akt2).